The chain runs to 1086 residues: NAD(P) transhydrogenase, mitochondrial (1086 aa).

The transit peptide at 1–43 directs the protein to the mitochondrion; it reads MANLLKTVVTGCSCPFLSNLGSCKVLPGKKNFLRAFHTHRILW. Topologically, residues 44–474 are mitochondrial matrix; that stretch reads CKAPVKPGIP…TITPFRKTMT (431 aa). K70 is subject to N6-acetyllysine. The residue at position 117 (K117) is an N6-succinyllysine. 182 to 184 provides a ligand contact to NAD(+); the sequence is RVT. An N6-succinyllysine modification is found at K224. NAD(+)-binding positions include V237, 257–259, and G287; that span reads DTR. K294 is subject to N6-succinyllysine. NAD(+) is bound by residues E300 and L319. Position 331 is an N6-succinyllysine (K331). Residue K397 is modified to N6-acetyllysine. The next 4 helical transmembrane spans lie at 475-493, 501-521, 527-546, and 558-578; these read SASV…GIAA, MVTT…GVTP, LMSV…LVLM, and GLAA…FLVT. At 579 to 595 the chain is on the mitochondrial matrix side; sequence QRMLDMFKRPTDPPEYN. 5 helical membrane-spanning segments follow: residues 596–616, 622–642, 646–666, 672–691, and 702–722; these read YLYL…LYSG, IMYL…STQG, LGNA…LGGL, LLAQ…LTIA, and LVAA…IAEY. Topologically, residues 723-739 are cytoplasmic; it reads IIEYPHFATDAAANLTK. A run of 5 helical transmembrane segments spans residues 740-760, 778-797, 801-819, 833-853, and 857-879; these read IVAY…LVAY, HLLN…PFMM, FTTG…AVMG, VVIT…GFLL, and LLTI…MCVA. At 880–1086 the chain is on the mitochondrial matrix side; that stretch reads MNRSLANVIL…QAKVRESYQK (207 aa). Residues Y933, 965-970, 1007-1011, 1026-1027, 1042-1049, and 1068-1069 contribute to the NADP(+) site; these read VAGRMP, GANDT, GM, KRSLGVGY, and DA. Position 1079 is an N6-succinyllysine (K1079).

In the N-terminal section; belongs to the AlaDH/PNT family. This sequence in the C-terminal section; belongs to the PNT beta subunit family. Homodimer.

The protein localises to the mitochondrion inner membrane. The catalysed reaction is NAD(+) + NADPH + H(+)(in) = NADH + NADP(+) + H(+)(out). The transhydrogenation between NADH and NADP is coupled to respiration and ATP hydrolysis and functions as a proton pump across the membrane. May play a role in reactive oxygen species (ROS) detoxification in the adrenal gland. This is NAD(P) transhydrogenase, mitochondrial (NNT) from Ovis aries (Sheep).